The chain runs to 309 residues: MIRIGTRGSLLATTQAATVRDALIAGGHSAELVTISTEGDRSMAPIASLGVGVFTTALREAMEAGLVDAAVHSYKDLPTAADPRFTVAAIPPRNDPRDAVVARDGLTLGELPVGSLVGTSSPRRAAQLRALGLGLEIRPLRGNLDTRLNKVSSGDLDAIVVARAGLARLGRLDDVTETLEPVQMLPAPAQGALAVECRAGDSRLVAVLAELDDADTRAAVTAERALLADLEAGCSAPVGAIAEVVESIDEDGRVFEELSLRGCVAALDGSDVIRASGIGSCGRARELGLSVAAELFELGARELMWGVRH.

Cysteine 234 bears the S-(dipyrrolylmethanemethyl)cysteine mark.

It belongs to the HMBS family. As to quaternary structure, monomer. Requires dipyrromethane as cofactor.

It catalyses the reaction 4 porphobilinogen + H2O = hydroxymethylbilane + 4 NH4(+). The protein operates within porphyrin-containing compound metabolism; protoporphyrin-IX biosynthesis; coproporphyrinogen-III from 5-aminolevulinate: step 2/4. Functionally, tetrapolymerization of the monopyrrole PBG into the hydroxymethylbilane pre-uroporphyrinogen in several discrete steps. This chain is Porphobilinogen deaminase (hemC), found in Mycobacterium bovis (strain ATCC BAA-935 / AF2122/97).